The following is a 484-amino-acid chain: ATP synthase subunit beta, chloroplastic (484 aa).

Gly163–Thr170 serves as a coordination point for ATP.

The protein belongs to the ATPase alpha/beta chains family. As to quaternary structure, F-type ATPases have 2 components, CF(1) - the catalytic core - and CF(0) - the membrane proton channel. CF(1) has five subunits: alpha(3), beta(3), gamma(1), delta(1), epsilon(1). CF(0) has four main subunits: a(1), b(1), b'(1) and c(9-12).

The protein resides in the plastid. It localises to the chloroplast thylakoid membrane. It carries out the reaction ATP + H2O + 4 H(+)(in) = ADP + phosphate + 5 H(+)(out). Functionally, produces ATP from ADP in the presence of a proton gradient across the membrane. The catalytic sites are hosted primarily by the beta subunits. The chain is ATP synthase subunit beta, chloroplastic from Stigeoclonium helveticum (Green alga).